Consider the following 600-residue polypeptide: Elongation factor 4 (600 aa).

One can recognise a tr-type G domain in the interval 4–186; that stretch reads SKIRNFSIIA…EIVKKIPAPQ (183 aa). GTP-binding positions include 16 to 21 and 133 to 136; these read DHGKST and NKID.

Belongs to the TRAFAC class translation factor GTPase superfamily. Classic translation factor GTPase family. LepA subfamily.

It localises to the cell inner membrane. The enzyme catalyses GTP + H2O = GDP + phosphate + H(+). Its function is as follows. Required for accurate and efficient protein synthesis under certain stress conditions. May act as a fidelity factor of the translation reaction, by catalyzing a one-codon backward translocation of tRNAs on improperly translocated ribosomes. Back-translocation proceeds from a post-translocation (POST) complex to a pre-translocation (PRE) complex, thus giving elongation factor G a second chance to translocate the tRNAs correctly. Binds to ribosomes in a GTP-dependent manner. The protein is Elongation factor 4 of Trichlorobacter lovleyi (strain ATCC BAA-1151 / DSM 17278 / SZ) (Geobacter lovleyi).